The following is a 433-amino-acid chain: Dihydrolipoyllysine-residue acetyltransferase component of pyruvate dehydrogenase complex (433 aa).

The 76-residue stretch at 2-77 (AFEFRLPDIG…VVGDVIVKID (76 aa)) folds into the Lipoyl-binding domain. The residue at position 43 (lysine 43) is an N6-lipoyllysine. Disordered stretches follow at residues 80-134 (DAEE…PSVR) and 164-204 (YLNG…FPET). Basic and acidic residues-rich tracts occupy residues 84-103 (MQFK…KEQE) and 117-126 (EKTEVDESKT). Positions 128 to 165 (KAMPSVRKYARENGVNIKAVNGSGKNGRITKEDIDAYL) constitute a Peripheral subunit-binding (PSBD) domain. The segment covering 166-185 (NGGSSEEGSNTSAASESTSS) has biased composition (low complexity). Histidine 404 is an active-site residue.

The protein belongs to the 2-oxoacid dehydrogenase family. Forms a 24-polypeptide structural core with octahedral symmetry. (R)-lipoate is required as a cofactor.

The catalysed reaction is N(6)-[(R)-dihydrolipoyl]-L-lysyl-[protein] + acetyl-CoA = N(6)-[(R)-S(8)-acetyldihydrolipoyl]-L-lysyl-[protein] + CoA. Functionally, the pyruvate dehydrogenase complex catalyzes the overall conversion of pyruvate to acetyl-CoA and CO(2). It contains multiple copies of three enzymatic components: pyruvate dehydrogenase (E1), dihydrolipoamide acetyltransferase (E2) and lipoamide dehydrogenase (E3). The protein is Dihydrolipoyllysine-residue acetyltransferase component of pyruvate dehydrogenase complex (pdhC) of Staphylococcus epidermidis (strain ATCC 35984 / DSM 28319 / BCRC 17069 / CCUG 31568 / BM 3577 / RP62A).